The primary structure comprises 311 residues: Olfactory receptor 10G8 (311 aa).

Residues 1–23 are Extracellular-facing; the sequence is MSNASLLTAFILMGLPHAPALDA. A glycan (N-linked (GlcNAc...) asparagine) is linked at N3. A helical membrane pass occupies residues 24-44; that stretch reads PLFGVFLVVYVLTVLGNLLIL. Over 45–52 the chain is Cytoplasmic; the sequence is LVIRVDSH. The chain crosses the membrane as a helical span at residues 53–73; that stretch reads LHTTMYYFLTNLSFIDMWFST. The Extracellular segment spans residues 74–98; sequence VTVPKLLMTLVFPSGRAISFHSCMA. Cysteines 96 and 188 form a disulfide. A helical membrane pass occupies residues 99–119; that stretch reads QLYFFHFLGGTECFLYRVMSC. Residues 120-138 lie on the Cytoplasmic side of the membrane; sequence DRYLAISYPLRYTSMMTGR. Residues 139 to 159 traverse the membrane as a helical segment; that stretch reads SCTLLATSTWLSGSLHSAVQA. The Extracellular segment spans residues 160–196; sequence ILTFHLPYCGPNWIQHYLCDAPPILKLACADTSAIET. The helical transmembrane segment at 197 to 216 threads the bilayer; that stretch reads VIFVTVGIVASGCFVLIVLS. At 217–236 the chain is on the cytoplasmic side; that stretch reads YVSIVCSILRIRTSEGKHRA. A helical membrane pass occupies residues 237–257; the sequence is FQTCASHCIVVLCFFGPGLFI. Residues 258 to 268 lie on the Extracellular side of the membrane; that stretch reads YLRPGSRKAVD. The chain crosses the membrane as a helical span at residues 269 to 289; the sequence is GVVAVFYTVLTPLLNPVVYTL. Over 290–311 the chain is Cytoplasmic; the sequence is RNKEVKKALLKLKDKVAHSQSK.

The protein belongs to the G-protein coupled receptor 1 family.

The protein resides in the cell membrane. Its function is as follows. Odorant receptor. In Homo sapiens (Human), this protein is Olfactory receptor 10G8 (OR10G8).